Consider the following 466-residue polypeptide: Argininosuccinate lyase (466 aa).

The protein belongs to the lyase 1 family. Argininosuccinate lyase subfamily.

The protein resides in the cytoplasm. It catalyses the reaction 2-(N(omega)-L-arginino)succinate = fumarate + L-arginine. Its pathway is amino-acid biosynthesis; L-arginine biosynthesis; L-arginine from L-ornithine and carbamoyl phosphate: step 3/3. This Bartonella bacilliformis (strain ATCC 35685 / KC583 / Herrer 020/F12,63) protein is Argininosuccinate lyase.